The following is a 146-amino-acid chain: Snake venom vascular endothelial growth factor toxin (146 aa).

The N-terminal stretch at 1-24 (MAAYLLAVAILFCIQGWPLGTVQG) is a signal peptide. The residue at position 25 (Gln-25) is a Pyrrolidone carboxylic acid. 3 disulfide bridges follow: Cys-38–Cys-80, Cys-69–Cys-115, and Cys-73–Cys-117. Residues 118–146 (RPRSASGVNSRKHKRNPEEGEQRAKFPFV) are disordered. Residues 133 to 146 (NPEEGEQRAKFPFV) show a composition bias toward basic and acidic residues.

Belongs to the PDGF/VEGF growth factor family. Snake venom VEGF subfamily. In terms of assembly, homodimer; disulfide-linked. Interacts with VEGF receptor-1 (FLT1) with a high affinity, whereas it binds to VEGF receptor-2 (KDR) with a low affinity. Does not bind VEGF receptor-3 (FLT4). Expressed by the venom gland.

Its subcellular location is the secreted. In terms of biological role, snake venom VEGFs that may contribute to venom dispersion and prey subjugation by inducing vascular permeability and hypotension. This protein induces an increase in capillary permeability after intradermal injection, as well as a drastic hypotensive effect after intravenous injection. The hypotension is mediated by nitric oxide (NO), which is produced by VEGF-activated endothelium NO synthase. Also induces angiogenesis in vitro. Like other crotalid VEGFs, this protein interacts with VEGF receptor-1 (FLT1) with a high affinity, whereas it binds to VEGF receptor-2 (KDR) with a low affinity. The chain is Snake venom vascular endothelial growth factor toxin from Bothrops erythromelas (Caatinga lance head).